The chain runs to 307 residues: Major pollen allergen Lol p 5a (307 aa).

The N-terminal stretch at methionine 1–alanine 25 is a signal peptide.

It belongs to the Poa p IX/Phl p VI allergen family. As to expression, pollen, starch granules.

This Lolium perenne (Perennial ryegrass) protein is Major pollen allergen Lol p 5a (LOLPIB).